Consider the following 113-residue polypeptide: Ribonuclease P protein component (113 aa).

This sequence belongs to the RnpA family. In terms of assembly, consists of a catalytic RNA component (M1 or rnpB) and a protein subunit.

It carries out the reaction Endonucleolytic cleavage of RNA, removing 5'-extranucleotides from tRNA precursor.. Its function is as follows. RNaseP catalyzes the removal of the 5'-leader sequence from pre-tRNA to produce the mature 5'-terminus. It can also cleave other RNA substrates such as 4.5S RNA. The protein component plays an auxiliary but essential role in vivo by binding to the 5'-leader sequence and broadening the substrate specificity of the ribozyme. The chain is Ribonuclease P protein component from Clostridium novyi (strain NT).